The following is a 610-amino-acid chain: Replication factor C large subunit (610 aa).

55–62 (GPAGIGKT) provides a ligand contact to ATP. Basic and acidic residues-rich tracts occupy residues 467-478 (EKEGNASAEKPE), 502-515 (LPEKKRSSEMKLPE), and 594-603 (DGSKKAEPKN). A disordered region spans residues 467-610 (EKEGNASAEK…PKNQKTLFDF (144 aa)).

This sequence belongs to the activator 1 small subunits family. RfcL subfamily. In terms of assembly, heteromultimer composed of small subunits (RfcS) and large subunits (RfcL).

In terms of biological role, part of the RFC clamp loader complex which loads the PCNA sliding clamp onto DNA. This chain is Replication factor C large subunit, found in Methanosarcina mazei (strain ATCC BAA-159 / DSM 3647 / Goe1 / Go1 / JCM 11833 / OCM 88) (Methanosarcina frisia).